Reading from the N-terminus, the 156-residue chain is Aspartate carbamoyltransferase regulatory chain (156 aa).

Zn(2+) contacts are provided by Cys110, Cys115, Cys140, and Cys143.

Belongs to the PyrI family. In terms of assembly, contains catalytic and regulatory chains. The cofactor is Zn(2+).

Its function is as follows. Involved in allosteric regulation of aspartate carbamoyltransferase. In Methanocella arvoryzae (strain DSM 22066 / NBRC 105507 / MRE50), this protein is Aspartate carbamoyltransferase regulatory chain.